The sequence spans 418 residues: Glutamyl-tRNA reductase (418 aa).

Substrate is bound by residues 49–52, S109, 114–116, and Q120; these read TCNR and EPQ. Catalysis depends on C50, which acts as the Nucleophile. Residue 189 to 194 coordinates NADP(+); sequence GAGETI.

This sequence belongs to the glutamyl-tRNA reductase family. In terms of assembly, homodimer.

It carries out the reaction (S)-4-amino-5-oxopentanoate + tRNA(Glu) + NADP(+) = L-glutamyl-tRNA(Glu) + NADPH + H(+). Its pathway is porphyrin-containing compound metabolism; protoporphyrin-IX biosynthesis; 5-aminolevulinate from L-glutamyl-tRNA(Glu): step 1/2. Functionally, catalyzes the NADPH-dependent reduction of glutamyl-tRNA(Glu) to glutamate 1-semialdehyde (GSA). This chain is Glutamyl-tRNA reductase, found in Escherichia coli O157:H7.